We begin with the raw amino-acid sequence, 122 residues long: Large ribosomal subunit protein bL20c (122 aa).

This sequence belongs to the bacterial ribosomal protein bL20 family.

Its subcellular location is the plastid. The protein localises to the chloroplast. Functionally, binds directly to 23S ribosomal RNA and is necessary for the in vitro assembly process of the 50S ribosomal subunit. It is not involved in the protein synthesizing functions of that subunit. The sequence is that of Large ribosomal subunit protein bL20c from Dioscorea elephantipes (Elephant's foot yam).